The following is a 189-amino-acid chain: Photosystem I assembly protein Ycf4 (189 aa).

2 consecutive transmembrane segments (helical) span residues 29-49 (WATI…SSYL) and 69-89 (LVMG…WLVI).

It belongs to the Ycf4 family.

The protein resides in the cellular thylakoid membrane. Seems to be required for the assembly of the photosystem I complex. In Nostoc punctiforme (strain ATCC 29133 / PCC 73102), this protein is Photosystem I assembly protein Ycf4.